The following is a 239-amino-acid chain: Leucyl/phenylalanyl-tRNA--protein transferase (239 aa).

This sequence belongs to the L/F-transferase family.

The protein resides in the cytoplasm. It carries out the reaction N-terminal L-lysyl-[protein] + L-leucyl-tRNA(Leu) = N-terminal L-leucyl-L-lysyl-[protein] + tRNA(Leu) + H(+). It catalyses the reaction N-terminal L-arginyl-[protein] + L-leucyl-tRNA(Leu) = N-terminal L-leucyl-L-arginyl-[protein] + tRNA(Leu) + H(+). The catalysed reaction is L-phenylalanyl-tRNA(Phe) + an N-terminal L-alpha-aminoacyl-[protein] = an N-terminal L-phenylalanyl-L-alpha-aminoacyl-[protein] + tRNA(Phe). Functionally, functions in the N-end rule pathway of protein degradation where it conjugates Leu, Phe and, less efficiently, Met from aminoacyl-tRNAs to the N-termini of proteins containing an N-terminal arginine or lysine. In Aliivibrio fischeri (strain ATCC 700601 / ES114) (Vibrio fischeri), this protein is Leucyl/phenylalanyl-tRNA--protein transferase.